We begin with the raw amino-acid sequence, 146 residues long: Large ribosomal subunit protein bL9 (146 aa).

Belongs to the bacterial ribosomal protein bL9 family.

Binds to the 23S rRNA. The protein is Large ribosomal subunit protein bL9 of Nautilia profundicola (strain ATCC BAA-1463 / DSM 18972 / AmH).